The following is a 339-amino-acid chain: Coproporphyrin III ferrochelatase (339 aa).

Fe-coproporphyrin III contacts are provided by Ser52 and Tyr121. Residues His181 and Glu264 each coordinate Fe(2+).

The protein belongs to the ferrochelatase family.

It is found in the cytoplasm. It catalyses the reaction Fe-coproporphyrin III + 2 H(+) = coproporphyrin III + Fe(2+). It participates in porphyrin-containing compound metabolism; protoheme biosynthesis. Functionally, involved in coproporphyrin-dependent heme b biosynthesis. Catalyzes the insertion of ferrous iron into coproporphyrin III to form Fe-coproporphyrin III. The chain is Coproporphyrin III ferrochelatase from Mycolicibacterium vanbaalenii (strain DSM 7251 / JCM 13017 / BCRC 16820 / KCTC 9966 / NRRL B-24157 / PYR-1) (Mycobacterium vanbaalenii).